The primary structure comprises 206 residues: Small ribosomal subunit protein uS4 (206 aa).

Residues 96 to 156 (CRLDNVVYRM…EKSKNQLRIA (61 aa)) form the S4 RNA-binding domain.

The protein belongs to the universal ribosomal protein uS4 family. In terms of assembly, part of the 30S ribosomal subunit. Contacts protein S5. The interaction surface between S4 and S5 is involved in control of translational fidelity.

Its function is as follows. One of the primary rRNA binding proteins, it binds directly to 16S rRNA where it nucleates assembly of the body of the 30S subunit. Functionally, with S5 and S12 plays an important role in translational accuracy. This is Small ribosomal subunit protein uS4 from Ectopseudomonas mendocina (strain ymp) (Pseudomonas mendocina).